The primary structure comprises 257 residues: Glutamate racemase (257 aa).

Residues 12 to 13 (DS) and 44 to 45 (YG) contribute to the substrate site. C75 serves as the catalytic Proton donor/acceptor. 76 to 77 (NT) lines the substrate pocket. The active-site Proton donor/acceptor is the C176. Position 177 to 178 (177 to 178 (TH)) interacts with substrate.

It belongs to the aspartate/glutamate racemases family.

The enzyme catalyses L-glutamate = D-glutamate. The protein operates within cell wall biogenesis; peptidoglycan biosynthesis. Its function is as follows. Provides the (R)-glutamate required for cell wall biosynthesis. The chain is Glutamate racemase from Thermus thermophilus (strain ATCC BAA-163 / DSM 7039 / HB27).